The chain runs to 250 residues: Phosphoribosylaminoimidazole-succinocarboxamide synthase (250 aa).

The protein belongs to the SAICAR synthetase family.

It carries out the reaction 5-amino-1-(5-phospho-D-ribosyl)imidazole-4-carboxylate + L-aspartate + ATP = (2S)-2-[5-amino-1-(5-phospho-beta-D-ribosyl)imidazole-4-carboxamido]succinate + ADP + phosphate + 2 H(+). The protein operates within purine metabolism; IMP biosynthesis via de novo pathway; 5-amino-1-(5-phospho-D-ribosyl)imidazole-4-carboxamide from 5-amino-1-(5-phospho-D-ribosyl)imidazole-4-carboxylate: step 1/2. This chain is Phosphoribosylaminoimidazole-succinocarboxamide synthase, found in Parasynechococcus marenigrum (strain WH8102).